The chain runs to 196 residues: MRQFVVLGHDAPTTPDFPLDDLPGAAGRLDVLCRCVSAALFVSHGIRDDVEVFLVLGDEVTVRIDAGAVQYMHPDERNVAGLLKQALDAKTEAIGHQEASSSPGIHVSKRGFEAVLDAVSGPVVALHEDGDALAAVDPLADPVFVLSDHRDFTAAEASLLADASDHRVRVGPTVLHADHAITVAHNHLDTAGFDAY.

Leucine 126 contributes to the S-adenosyl-L-methionine binding site.

It belongs to the methyltransferase superfamily. TrmY family. In terms of assembly, homodimer.

Its subcellular location is the cytoplasm. The catalysed reaction is pseudouridine(54) in tRNA + S-adenosyl-L-methionine = N(1)-methylpseudouridine(54) in tRNA + S-adenosyl-L-homocysteine + H(+). Functionally, specifically catalyzes the N1-methylation of pseudouridine at position 54 (Psi54) in tRNAs. This is tRNA (pseudouridine(54)-N(1))-methyltransferase from Halobacterium salinarum (strain ATCC 700922 / JCM 11081 / NRC-1) (Halobacterium halobium).